Here is an 861-residue protein sequence, read N- to C-terminus: Piwi-like protein 1 (861 aa).

The segment covering Met-1 to Ala-13 has biased composition (basic residues). The tract at residues Met-1–Gly-64 is disordered. Arg-14 is subject to Omega-N-methylarginine; by PRMT5; alternate. The residue at position 14 (Arg-14) is a Symmetric dimethylarginine; by PRMT5; alternate. A compositionally biased stretch (polar residues) spans Glu-17–Ser-27. An Omega-N-methylarginine; by PRMT5 modification is found at Arg-49. Arg-53 is modified (omega-N-methylarginine; alternate). A Symmetric dimethylarginine; alternate modification is found at Arg-53. The D-box signature appears at Arg-217–Asn-224. The PAZ domain maps to Thr-278–Gly-391. The required for binding 2'-O-methylated 3'-end of piRNAs stretch occupies residues Thr-316–Arg-318. At Arg-370 the chain carries Omega-N-methylarginine; by PRMT5. An MID region region spans residues Ser-479 to Glu-615. The Piwi domain maps to Ile-555 to His-847. Residues Asp-632, Glu-670, Asp-702, and His-836 contribute to the active site.

Belongs to the argonaute family. Piwi subfamily. In terms of assembly, interacts (via Piwi domain) with DICER1, suggesting that it forms ribonucleoprotein RISC complexes; this interaction is regulated by HSP90AB1 activity. Interacts with MAEL, KIF17, PABPC1, PRMT5 and WDR77. Interacts (when methylated on arginine residues) with TDRD1, TDRKH/TDRD2, RNF17/TDRD4, TDRD6, TDRD7 and TDRD9. Interacts with CLOCK. Interacts with MOV10L1. Interacts with ANAPC10; interaction oly takes place following piRNA-binding. Interacts with RNF8; leading to sequester RNF8 in the cytoplasm. Interacts with TEX19. Mg(2+) serves as cofactor. In terms of processing, arginine methylation by PRMT5 is required for the interaction with Tudor domain-containing protein (TDRD1, TDRKH/TDRD2, RNF17/TDRD4, TDRD6, TDRD7 and TDRD9) and subsequent localization to the meiotic nuage, also named P granule. Post-translationally, ubiquitinated by the anaphase promoting complex/cyclosome (APC/C) in late spermatids, leading to its degradation. Ubiquitination only takes place following piRNA-binding in adult testis. Ubiquitination and degradation in late spermatogenesis by APC/C is probably required to release RNF8 from the cytoplasm and promote histone to protamine exchange by RNF8. In terms of tissue distribution, expressed in spermatocytes and spermatids. Also detected in prostate cancer (at protein level). Detected in most fetal and adult tissues. Expressed in testes, specifically in germline cells; detected in spermatocytes and spermatids during spermatogenesis. Increased expression in testicular tumors originating from embryonic germ cells with retention of germ cells phenotype. No expression in testicular tumors of somatic origin, such as Sertoli cell and Leydig cell tumors. Overexpressed in gastric cancer cells. Isoform 3: Ubiquitously expressed, and specifically in CD34(+) hematopoietic progenitor cells but not in more differentiated cells.

Its subcellular location is the cytoplasm. Its function is as follows. Endoribonuclease that plays a central role in postnatal germ cells by repressing transposable elements and preventing their mobilization, which is essential for the germline integrity. Acts via the piRNA metabolic process, which mediates the repression of transposable elements during meiosis by forming complexes composed of piRNAs and Piwi proteins and governs the methylation and subsequent repression of transposons. Directly binds methylated piRNAs, a class of 24 to 30 nucleotide RNAs that are generated by a Dicer-independent mechanism and are primarily derived from transposons and other repeated sequence elements. Strongly prefers a uridine in the first position of their guide (g1U preference, also named 1U-bias). Not involved in the piRNA amplification loop, also named ping-pong amplification cycle. Acts as an endoribonuclease that cleaves transposon messenger RNAs. Besides their function in transposable elements repression, piRNAs are probably involved in other processes during meiosis such as translation regulation. Probable component of some RISC complex, which mediates RNA cleavage and translational silencing. Also plays a role in the formation of chromatoid bodies and is required for some miRNAs stability. Required to sequester RNF8 in the cytoplasm until late spermatogenesis; RNF8 being released upon ubiquitination and degradation of PIWIL1. Functionally, may be a negative developmental regulator. The sequence is that of Piwi-like protein 1 (PIWIL1) from Homo sapiens (Human).